A 782-amino-acid chain; its full sequence is LPS-assembly protein LptD (782 aa).

The signal sequence occupies residues 1–23 (MNKKHTLISLAILTALYSQQSLA).

Belongs to the LptD family. As to quaternary structure, component of the lipopolysaccharide transport and assembly complex. Interacts with LptE and LptA.

The protein localises to the cell outer membrane. Functionally, together with LptE, is involved in the assembly of lipopolysaccharide (LPS) at the surface of the outer membrane. The polypeptide is LPS-assembly protein LptD (Haemophilus influenzae (strain ATCC 51907 / DSM 11121 / KW20 / Rd)).